Consider the following 1086-residue polypeptide: Receptor-type guanylate cyclase gcy-6 (1086 aa).

A signal peptide spans 1-21 (MIGVYLRSVIFPLLFVIQTIC). Topologically, residues 22-487 (QPPGNVFHLG…PANVFFQYIG (466 aa)) are extracellular. N-linked (GlcNAc...) asparagine glycosylation is found at asparagine 325, asparagine 343, asparagine 387, and asparagine 427. Residues 488-508 (WFIAAIIIIFFTIMGAILAFI) form a helical membrane-spanning segment. Topologically, residues 509-1086 (YLCHAKQQEV…APKILKKKQD (578 aa)) are cytoplasmic. Positions 560–836 (SSTLSEVGET…NDNLMDHVFN (277 aa)) constitute a Protein kinase domain. Residues 566 to 574 (VGETRNYLF) and lysine 589 contribute to the ATP site. The region spanning 894 to 1024 (TLFFSDVVSF…DAVNTASRME (131 aa)) is the Guanylate cyclase domain.

It belongs to the adenylyl cyclase class-4/guanylyl cyclase family. In terms of tissue distribution, expressed in both ASEL and ASER neurons throughout late embryonic and early larval stages. In adults, expressed asymmetrically in ASE left (ASEL) sensory neuron.

The protein localises to the cell membrane. The catalysed reaction is GTP = 3',5'-cyclic GMP + diphosphate. Its function is as follows. Guanylate cyclase involved in the production of the second messenger cGMP. Regulates chemotaxis responses toward the salt ion Mg(2+) and to a lesser extent toward Cl(1-) in ASE left (ASEL) sensory neuron. The protein is Receptor-type guanylate cyclase gcy-6 of Caenorhabditis elegans.